Reading from the N-terminus, the 135-residue chain is Protein PsiE homolog (135 aa).

The next 4 membrane-spanning stretches (helical) occupy residues 14 to 34, 54 to 74, 82 to 102, and 107 to 127; these read LQTILNIGLLVLATILVIFLV, YQLIEGIVIYFLYFEFIALIV, HFPLRYFIYIGITAIIRLIIV, and PSDTLMYSAAILLLVVTLYLA.

This sequence belongs to the PsiE family.

The protein localises to the cell inner membrane. The chain is Protein PsiE homolog from Pectobacterium carotovorum subsp. carotovorum (strain PC1).